Reading from the N-terminus, the 376-residue chain is 23S rRNA (uracil(747)-C(5))-methyltransferase RlmC (376 aa).

C3, C11, C14, and C88 together coordinate [4Fe-4S] cluster. The S-adenosyl-L-methionine site is built by Q213, F242, E263, and N308. Residue C335 is the Nucleophile of the active site.

This sequence belongs to the class I-like SAM-binding methyltransferase superfamily. RNA M5U methyltransferase family. RlmC subfamily.

The catalysed reaction is uridine(747) in 23S rRNA + S-adenosyl-L-methionine = 5-methyluridine(747) in 23S rRNA + S-adenosyl-L-homocysteine + H(+). Its function is as follows. Catalyzes the formation of 5-methyl-uridine at position 747 (m5U747) in 23S rRNA. In Vibrio vulnificus (strain YJ016), this protein is 23S rRNA (uracil(747)-C(5))-methyltransferase RlmC.